The sequence spans 277 residues: MKTKLDFLKMKESEEPIVMLTAYDYPAAKLAEQAGVDMILVGDSLGMVVLGLDSTVGVTVADMIHHTKAVKRGAPNTFIVTDMPFMSYHLSKEDTLKNAAAIVQESGADALKLEGGEGVFESIRALTLGGIPVVSHLGLTPQSVGVLGGYKVQGKDEQSAKKLIEDSIKCEEAGAMMLVLECVPAELTAKIAETLSIPVIGIGAGVKADGQVLVYHDIIGHGVERTPKFVKQYTRIDETIETAISGYVQDVRHRAFPEQKHSFQMNQTVLDGLYGGK.

Asp-43 and Asp-82 together coordinate Mg(2+). Residues 43-44, Asp-82, and Lys-112 contribute to the 3-methyl-2-oxobutanoate site; that span reads DS. Position 114 (Glu-114) interacts with Mg(2+). Glu-181 acts as the Proton acceptor in catalysis.

It belongs to the PanB family. Homodecamer; pentamer of dimers. It depends on Mg(2+) as a cofactor.

The protein localises to the cytoplasm. The catalysed reaction is 3-methyl-2-oxobutanoate + (6R)-5,10-methylene-5,6,7,8-tetrahydrofolate + H2O = 2-dehydropantoate + (6S)-5,6,7,8-tetrahydrofolate. The protein operates within cofactor biosynthesis; (R)-pantothenate biosynthesis; (R)-pantoate from 3-methyl-2-oxobutanoate: step 1/2. Catalyzes the reversible reaction in which hydroxymethyl group from 5,10-methylenetetrahydrofolate is transferred onto alpha-ketoisovalerate to form ketopantoate. This Bacillus subtilis (strain 168) protein is 3-methyl-2-oxobutanoate hydroxymethyltransferase.